We begin with the raw amino-acid sequence, 398 residues long: Maltoporin (398 aa).

The N-terminal stretch at 1–30 (MTDKNNKRLFKVAPLATAIAASLFTVNASA) is a signal peptide.

The protein belongs to the porin LamB (TC 1.B.3) family. Homotrimer formed of three 18-stranded antiparallel beta-barrels, containing three independent channels.

Its subcellular location is the cell outer membrane. The enzyme catalyses beta-maltose(in) = beta-maltose(out). Functionally, involved in the transport of maltose and maltodextrins. The protein is Maltoporin of Hahella chejuensis (strain KCTC 2396).